The primary structure comprises 316 residues: Annexin A13 (316 aa).

Gly2 carries the N-myristoyl glycine lipid modification. Annexin repeat units follow at residues 14–85, 86–157, 169–241, and 245–316; these read FDVD…ALLD, RPSE…SLLQ, DLAG…TLVR, and DQEG…ALLH.

Belongs to the annexin family. In terms of assembly, monomer and homodimer. Detected in intestine, and at much lower levels also in kidney (at protein level).

It is found in the apical cell membrane. Its subcellular location is the cell membrane. It localises to the cytoplasmic vesicle. Functionally, binds to membranes enriched in phosphatidylserine or phosphatidylglycerol in a calcium-dependent manner. Half-maximal membrane binding requires about 60 uM calcium. Does not bind to membranes that lack phospholipids with an acidic headgroup. Binds to membranes enriched in phosphatidylserine or phosphatidylglycerol in a calcium-dependent manner, but requires higher calcium levels for membrane binding than isoform A. Half-maximal membrane binding requires about 320 uM calcium. May play a role in vesicular traffic to the apical plasma membrane. The polypeptide is Annexin A13 (ANXA13) (Canis lupus familiaris (Dog)).